We begin with the raw amino-acid sequence, 83 residues long: Mu-theraphotoxin-Hhn2l (83 aa).

The signal sequence occupies residues 1–21 (MKASMFLALAGLVLLFVVGYA). The propeptide occupies 22-48 (SESEEKEFPIELLSKIFAVDVFKGEER). 3 disulfides stabilise this stretch: Cys50-Cys65, Cys57-Cys70, and Cys64-Cys77. Leu81 carries the post-translational modification Leucine amide.

This sequence belongs to the neurotoxin 10 (Hwtx-1) family. 15 (Hntx-3) subfamily. As to quaternary structure, monomer. As to expression, expressed by the venom gland.

Its subcellular location is the secreted. Lethal neurotoxin. Selectively blocks tetrodotoxin-sensitive voltage-gated sodium channels (Nav). Does not affect tetrodotoxin-resistant voltage-gated sodium channels or calcium channels. This is Mu-theraphotoxin-Hhn2l from Cyriopagopus hainanus (Chinese bird spider).